Consider the following 298-residue polypeptide: Glycine--tRNA ligase alpha subunit (298 aa).

The protein belongs to the class-II aminoacyl-tRNA synthetase family. As to quaternary structure, tetramer of two alpha and two beta subunits.

Its subcellular location is the cytoplasm. The catalysed reaction is tRNA(Gly) + glycine + ATP = glycyl-tRNA(Gly) + AMP + diphosphate. This Helicobacter pylori (strain P12) protein is Glycine--tRNA ligase alpha subunit.